Consider the following 235-residue polypeptide: Exotoxin type C (235 aa).

A signal peptide spans 1–27 (MKKINIIKIVFIITVILISTISPIIKS). Zn(2+)-binding residues include H194, H228, and D230.

Belongs to the staphylococcal/streptococcal toxin family.

In terms of biological role, superantigen that acts as a causative agent of the symptoms associated with scarlet fever. Has been associated with streptococcal toxic shock-like disease and may play a role in the early events of rheumatic fever. Superantigens cross-link major histocompatibility complex (MHC) class II and T-cell receptor (TCR) molecules, resulting in an overstimulation of T-cells associated with a massive release of pyrogenic and inflammatory cytokines. The chain is Exotoxin type C (speC) from Streptococcus pyogenes serotype M1.